Here is a 92-residue protein sequence, read N- to C-terminus: Small ribosomal subunit protein uS19 (92 aa).

It belongs to the universal ribosomal protein uS19 family.

Its function is as follows. Protein S19 forms a complex with S13 that binds strongly to the 16S ribosomal RNA. The polypeptide is Small ribosomal subunit protein uS19 (Cereibacter sphaeroides (strain ATCC 17029 / ATH 2.4.9) (Rhodobacter sphaeroides)).